The chain runs to 187 residues: Biogenesis of lysosome-related organelles complex 1 subunit 5 (187 aa).

Residues 1-26 (MSGGGTETPVGCEAAPGGGSKKRDSL) are disordered. S2 bears the N-acetylserine mark. Positions 154 to 186 (NKRAEVDEEHRKAMERLKEQYAEMEKDLAKFST) form a coiled coil.

Belongs to the BLOC1S5 family. In terms of assembly, interacts with BLOC1S4, DTNBP1/BLOC1S7 and PI4K2A. Component of the biogenesis of lysosome-related organelles complex 1 (BLOC-1) composed of BLOC1S1, BLOC1S2, BLOC1S3, BLOC1S4, BLOC1S5, BLOC1S6, DTNBP1/BLOC1S7 and SNAPIN/BLOC1S8. Octamer composed of one copy each BLOC1S1, BLOC1S2, BLOC1S3, BLOC1S4, BLOC1S5, BLOC1S6, DTNBP1/BLOC1S7 and SNAPIN/BLOC1S8. The BLOC-1 complex associates with the AP-3 protein complex and membrane protein cargos. Interacts with BLOC1S6.

Its function is as follows. Component of the BLOC-1 complex, a complex that is required for normal biogenesis of lysosome-related organelles (LRO), such as platelet dense granules and melanosomes. In concert with the AP-3 complex, the BLOC-1 complex is required to target membrane protein cargos into vesicles assembled at cell bodies for delivery into neurites and nerve terminals. The BLOC-1 complex, in association with SNARE proteins, is also proposed to be involved in neurite extension. Plays a role in intracellular vesicle trafficking. This is Biogenesis of lysosome-related organelles complex 1 subunit 5 from Homo sapiens (Human).